The following is a 102-amino-acid chain: ATP-dependent Clp protease adapter protein ClpS (102 aa).

Belongs to the ClpS family. As to quaternary structure, binds to the N-terminal domain of the chaperone ClpA.

In terms of biological role, involved in the modulation of the specificity of the ClpAP-mediated ATP-dependent protein degradation. The polypeptide is ATP-dependent Clp protease adapter protein ClpS (Shewanella oneidensis (strain ATCC 700550 / JCM 31522 / CIP 106686 / LMG 19005 / NCIMB 14063 / MR-1)).